Consider the following 76-residue polypeptide: Bomanin Tailed 2 (76 aa).

The first 22 residues, 1 to 22 (MKALQVAGTLMLLFCLLAAVNA), serve as a signal peptide directing secretion. Positions 23-24 (TP) are cleaved as a propeptide — removed by a dipeptidylpeptidase. A disulfide bridge connects residues Cys-33 and Cys-36.

The protein belongs to the bomanin family.

The protein localises to the secreted. In terms of biological role, secreted immune-induced peptide induced by Toll signaling. Has a role in resistance to bacterial and fungal infections. The strength of antimicrobial activity appears to correlate with the overall level of expression. The chain is Bomanin Tailed 2 from Drosophila melanogaster (Fruit fly).